Reading from the N-terminus, the 259-residue chain is UPF0246 protein ABBFA_001173 (259 aa).

The protein belongs to the UPF0246 family.

The chain is UPF0246 protein ABBFA_001173 from Acinetobacter baumannii (strain AB307-0294).